We begin with the raw amino-acid sequence, 98 residues long: NADH-ubiquinone oxidoreductase chain 4L (98 aa).

3 helical membrane-spanning segments follow: residues 1–21 (MPST…GLLL), 29–49 (SLLC…LMAL), and 61–81 (IVLM…LVMV).

The protein belongs to the complex I subunit 4L family. In terms of assembly, core subunit of respiratory chain NADH dehydrogenase (Complex I) which is composed of 45 different subunits.

It localises to the mitochondrion inner membrane. The enzyme catalyses a ubiquinone + NADH + 5 H(+)(in) = a ubiquinol + NAD(+) + 4 H(+)(out). Its function is as follows. Core subunit of the mitochondrial membrane respiratory chain NADH dehydrogenase (Complex I) which catalyzes electron transfer from NADH through the respiratory chain, using ubiquinone as an electron acceptor. Part of the enzyme membrane arm which is embedded in the lipid bilayer and involved in proton translocation. The protein is NADH-ubiquinone oxidoreductase chain 4L (MT-ND4L) of Choloepus didactylus (Southern two-toed sloth).